A 131-amino-acid chain; its full sequence is ATP synthase epsilon chain (131 aa).

It belongs to the ATPase epsilon chain family. As to quaternary structure, F-type ATPases have 2 components, CF(1) - the catalytic core - and CF(0) - the membrane proton channel. CF(1) has five subunits: alpha(3), beta(3), gamma(1), delta(1), epsilon(1). CF(0) has three main subunits: a, b and c.

Its subcellular location is the cell inner membrane. Produces ATP from ADP in the presence of a proton gradient across the membrane. This is ATP synthase epsilon chain from Wolinella succinogenes (strain ATCC 29543 / DSM 1740 / CCUG 13145 / JCM 31913 / LMG 7466 / NCTC 11488 / FDC 602W) (Vibrio succinogenes).